Consider the following 193-residue polypeptide: Ion-translocating oxidoreductase complex subunit A (193 aa).

6 helical membrane-spanning segments follow: residues 4–24 (FLLVLLSTALVNNVVLVKFLG), 39–59 (IGMGLATTFVITVASAACWLV), 71–91 (FLRILSMILVIAAIVQFIETV), 102–122 (ALGIYLPLITTNCAVLGLPLM), 134–154 (TLSGFGASVGFTLVLVIFAGM), and 171–191 (PIAFVSAGLLGLAFMGFAGLV).

The protein belongs to the NqrDE/RnfAE family. In terms of assembly, the complex is composed of six subunits: RnfA, RnfB, RnfC, RnfD, RnfE and RnfG.

It localises to the cellular chromatophore membrane. Functionally, part of a membrane-bound complex that couples electron transfer with translocation of ions across the membrane. Required for nitrogen fixation. Involved in electron transfer to nitrogenase. In Rhodobacter capsulatus (Rhodopseudomonas capsulata), this protein is Ion-translocating oxidoreductase complex subunit A.